Consider the following 175-residue polypeptide: Ribosome maturation factor RimM (175 aa).

In terms of domain architecture, PRC barrel spans 100-173; it reads EGEYYFHEII…IIIIRPMEGL (74 aa).

Belongs to the RimM family. As to quaternary structure, binds ribosomal protein uS19.

It is found in the cytoplasm. In terms of biological role, an accessory protein needed during the final step in the assembly of 30S ribosomal subunit, possibly for assembly of the head region. Essential for efficient processing of 16S rRNA. May be needed both before and after RbfA during the maturation of 16S rRNA. It has affinity for free ribosomal 30S subunits but not for 70S ribosomes. The protein is Ribosome maturation factor RimM of Geobacillus thermodenitrificans (strain NG80-2).